The primary structure comprises 584 residues: Protein DENND6A (584 aa).

A disordered region spans residues 1–23; it reads MALWERGAGGAAEAGEDATEEPE. Residues 39–218 enclose the uDENN domain; it reads HCVCVVGFDL…KLRIPTYRDK (180 aa). The cDENN domain maps to 244–369; the sequence is EVDLFRCFCP…VKVKKLKNLK (126 aa). The dDENN domain occupies 371–504; it reads LDSKPGVYTS…RSRQKEMTQN (134 aa).

It belongs to the DENND6 family.

The protein localises to the recycling endosome. It localises to the cytoplasm. Guanine nucleotide exchange factor (GEF) for RAB14. The chain is Protein DENND6A (DENND6A) from Gallus gallus (Chicken).